The following is a 297-amino-acid chain: Probable replication protein rep (297 aa).

It belongs to the initiator RepB protein family.

The chain is Probable replication protein rep (rep) from Bifidobacterium longum (strain NCC 2705).